The primary structure comprises 487 residues: GPI mannosyltransferase 1 (487 aa).

Transmembrane regions (helical) follow at residues 26 to 46 (PLPLYVSAFLLRIVLLLYGLW), 87 to 107 (ILAWLLLPTTWTAGAQWGPWA), and 121 to 141 (VLFAAADLVAGWLIEQVLVMG). Residues 147–175 (SAAKGKEKDTEKTKEGGKKGPSVTASTGM) form a disordered region. Positions 150–164 (KGKEKDTEKTKEGGK) are enriched in basic and acidic residues. Transmembrane regions (helical) follow at residues 205 to 225 (LLGVLVMALLWAVLSRRITLA), 227 to 247 (LLLGFSVHFKIYPFIYAPAIV), 289 to 309 (LLLAFTSLATFLSLNFLMYRL), 359 to 379 (IESLAFLPQLVLSTILIPLTL), 393 to 413 (FAFVTFNKVCTSQYFLWYLVL), 429 to 449 (MGLVALGLWVLGQALWLQQAY), and 462 to 482 (GLWMASLGFFVVNCWILGVIV).

Belongs to the PIGM family.

It localises to the endoplasmic reticulum membrane. The protein operates within glycolipid biosynthesis; glycosylphosphatidylinositol-anchor biosynthesis. Mannosyltransferase involved in glycosylphosphatidylinositol-anchor biosynthesis. Transfers the first alpha-1,4-mannose to GlcN-acyl-PI during GPI precursor assembly. Required for cell wall integrity. The protein is GPI mannosyltransferase 1 (gim-1) of Neurospora crassa (strain ATCC 24698 / 74-OR23-1A / CBS 708.71 / DSM 1257 / FGSC 987).